We begin with the raw amino-acid sequence, 74 residues long: MLEGAKSIGAGAATIASAGAAVGIGNVFSSLIHSVARNPSLAKQLFGYAILGFALTEAIALFALMMAFLILFVF.

2 consecutive transmembrane segments (helical) span residues 8–28 (IGAGAATIASAGAAVGIGNVF) and 45–72 (LFGYAILGFALTEAIALFALMMAFLILF).

The protein belongs to the ATPase C chain family. F-type ATPases have 2 components, CF(1) - the catalytic core - and CF(0) - the membrane proton channel. CF(1) has five subunits: alpha(3), beta(3), gamma(1), delta(1), epsilon(1). CF(0) has three main subunits: a, b and c.

The protein localises to the mitochondrion membrane. Functionally, this protein is one of the chains of the nonenzymatic membrane component (F0) of mitochondrial ATPase. The polypeptide is ATP synthase subunit 9, mitochondrial (ATP9) (Pisum sativum (Garden pea)).